Here is a 145-residue protein sequence, read N- to C-terminus: Putative pre-16S rRNA nuclease (145 aa).

Belongs to the YqgF nuclease family.

It is found in the cytoplasm. Could be a nuclease involved in processing of the 5'-end of pre-16S rRNA. This is Putative pre-16S rRNA nuclease from Tropheryma whipplei (strain Twist) (Whipple's bacillus).